A 119-amino-acid polypeptide reads, in one-letter code: Large ribosomal subunit protein bL20 (119 aa).

Belongs to the bacterial ribosomal protein bL20 family.

Functionally, binds directly to 23S ribosomal RNA and is necessary for the in vitro assembly process of the 50S ribosomal subunit. It is not involved in the protein synthesizing functions of that subunit. In Shewanella frigidimarina (strain NCIMB 400), this protein is Large ribosomal subunit protein bL20.